Reading from the N-terminus, the 335-residue chain is Deoxyhypusine hydroxylase (335 aa).

5 HEAT-like PBS-type repeats span residues leucine 71–aspartate 97, cysteine 104–asparagine 130, leucine 200–aspartate 233, phenylalanine 238–asparagine 264, and valine 271–aspartate 298. Residues histidine 73, glutamate 74, histidine 106, and glutamate 107 each contribute to the Fe cation site. Fe cation is bound by residues histidine 240, glutamate 241, histidine 273, and glutamate 274.

The protein belongs to the deoxyhypusine hydroxylase family. Fe(2+) serves as cofactor.

Its subcellular location is the cytoplasm. The protein localises to the nucleus. It carries out the reaction [eIF5A protein]-deoxyhypusine + AH2 + O2 = [eIF5A protein]-hypusine + A + H2O. It participates in protein modification; eIF5A hypusination. In terms of biological role, catalyzes the hydroxylation of the N(6)-(4-aminobutyl)-L-lysine intermediate to form hypusine, an essential post-translational modification only found in mature eIF-5A factor. The protein is Deoxyhypusine hydroxylase (lia1) of Neosartorya fischeri (strain ATCC 1020 / DSM 3700 / CBS 544.65 / FGSC A1164 / JCM 1740 / NRRL 181 / WB 181) (Aspergillus fischerianus).